The sequence spans 358 residues: Uroporphyrinogen decarboxylase (358 aa).

Substrate contacts are provided by residues 27-31, Asp77, Tyr154, Ser209, and His327; that span reads RQAGR.

This sequence belongs to the uroporphyrinogen decarboxylase family. Homodimer.

It is found in the cytoplasm. It carries out the reaction uroporphyrinogen III + 4 H(+) = coproporphyrinogen III + 4 CO2. It functions in the pathway porphyrin-containing compound metabolism; protoporphyrin-IX biosynthesis; coproporphyrinogen-III from 5-aminolevulinate: step 4/4. Catalyzes the decarboxylation of four acetate groups of uroporphyrinogen-III to yield coproporphyrinogen-III. The protein is Uroporphyrinogen decarboxylase of Azoarcus sp. (strain BH72).